A 341-amino-acid polypeptide reads, in one-letter code: Methionine import ATP-binding protein MetN 2 (341 aa).

Residues 2–241 (IELKEVVKEY…PQHTVTKRFV (240 aa)) enclose the ABC transporter domain. 38–45 (GFSGAGKS) provides a ligand contact to ATP.

This sequence belongs to the ABC transporter superfamily. Methionine importer (TC 3.A.1.24) family. The complex is composed of two ATP-binding proteins (MetN), two transmembrane proteins (MetI) and a solute-binding protein (MetQ).

It is found in the cell membrane. The catalysed reaction is L-methionine(out) + ATP + H2O = L-methionine(in) + ADP + phosphate + H(+). The enzyme catalyses D-methionine(out) + ATP + H2O = D-methionine(in) + ADP + phosphate + H(+). Its function is as follows. Part of the ABC transporter complex MetNIQ involved in methionine import. Responsible for energy coupling to the transport system. The sequence is that of Methionine import ATP-binding protein MetN 2 from Staphylococcus aureus (strain N315).